A 199-amino-acid chain; its full sequence is Recombination protein RecR (199 aa).

A C4-type zinc finger spans residues 57-72 (CEKCNNFTEEVVCELC). The 96-residue stretch at 80 to 175 (ALLCVVEMPA…KITRIARGLP (96 aa)) folds into the Toprim domain.

It belongs to the RecR family.

May play a role in DNA repair. It seems to be involved in an RecBC-independent recombinational process of DNA repair. It may act with RecF and RecO. The protein is Recombination protein RecR of Nitrosospira multiformis (strain ATCC 25196 / NCIMB 11849 / C 71).